The sequence spans 286 residues: Pantothenate synthetase (286 aa).

ATP is bound at residue 30 to 37 (MGFLHEGH). The active-site Proton donor is the His-37. Gln-61 contributes to the (R)-pantoate binding site. Gln-61 serves as a coordination point for beta-alanine. 147 to 150 (GLKD) contacts ATP. A (R)-pantoate-binding site is contributed by Gln-153. ATP-binding positions include Val-176 and 184–187 (KSSR).

The protein belongs to the pantothenate synthetase family. As to quaternary structure, homodimer.

It is found in the cytoplasm. It carries out the reaction (R)-pantoate + beta-alanine + ATP = (R)-pantothenate + AMP + diphosphate + H(+). It participates in cofactor biosynthesis; (R)-pantothenate biosynthesis; (R)-pantothenate from (R)-pantoate and beta-alanine: step 1/1. Catalyzes the condensation of pantoate with beta-alanine in an ATP-dependent reaction via a pantoyl-adenylate intermediate. The sequence is that of Pantothenate synthetase from Bacillus subtilis (strain 168).